Consider the following 384-residue polypeptide: Putative sarcosine oxidase (384 aa).

Residue 6 to 36 (DVVVVGAGIFGSCTAYNCQKIGLKTLLLEQF) coordinates FAD. Position 315 is an S-8alpha-FAD cysteine (Cys-315).

This sequence belongs to the MSOX/MTOX family. FAD serves as cofactor.

It catalyses the reaction sarcosine + O2 + H2O = formaldehyde + glycine + H2O2. The protein is Putative sarcosine oxidase of Caenorhabditis elegans.